A 44-amino-acid chain; its full sequence is Photosystem I reaction center subunit IX 2 (44 aa).

Residues 13-35 traverse the membrane as a helical segment; the sequence is APVLATLWLSSTAVILIGVNSYF.

Belongs to the PsaJ family.

The protein resides in the cellular thylakoid membrane. May help in the organization of the PsaE and PsaF subunits. The polypeptide is Photosystem I reaction center subunit IX 2 (psaJ2) (Prochlorococcus marinus (strain NATL2A)).